Reading from the N-terminus, the 149-residue chain is UPF0178 protein VFMJ11_0615 (149 aa).

This sequence belongs to the UPF0178 family.

The polypeptide is UPF0178 protein VFMJ11_0615 (Aliivibrio fischeri (strain MJ11) (Vibrio fischeri)).